Here is a 314-residue protein sequence, read N- to C-terminus: RNA 2',3'-cyclic phosphodiesterase (314 aa).

The Proton donor role is filled by H43. 2 short sequence motifs (HXTX) span residues 43-46 and 129-132; these read HITL and HITI. H129 serves as the catalytic Proton acceptor.

It belongs to the 2H phosphoesterase superfamily. ThpR family.

It catalyses the reaction a 3'-end 2',3'-cyclophospho-ribonucleotide-RNA + H2O = a 3'-end 2'-phospho-ribonucleotide-RNA + H(+). Hydrolyzes RNA 2',3'-cyclic phosphodiester to an RNA 2'-phosphomonoester. The chain is RNA 2',3'-cyclic phosphodiesterase from Geobacillus stearothermophilus (Bacillus stearothermophilus).